The sequence spans 332 residues: NADH-quinone oxidoreductase subunit H (332 aa).

9 helical membrane-spanning segments follow: residues 4-24 (FAFF…IFAS), 44-64 (IGPD…MIKL), 78-98 (FIFA…LAAI), 120-140 (VALL…FLGG), 165-185 (VGAL…LVDI), 194-214 (FSWL…ALFI), 255-275 (IAGA…FWII), 279-299 (IMMI…RAAF), and 312-332 (YLIL…AVLL).

Belongs to the complex I subunit 1 family. In terms of assembly, NDH-1 is composed of 14 different subunits. Subunits NuoA, H, J, K, L, M, N constitute the membrane sector of the complex.

The protein resides in the cell inner membrane. The catalysed reaction is a quinone + NADH + 5 H(+)(in) = a quinol + NAD(+) + 4 H(+)(out). Functionally, NDH-1 shuttles electrons from NADH, via FMN and iron-sulfur (Fe-S) centers, to quinones in the respiratory chain. The immediate electron acceptor for the enzyme in this species is believed to be ubiquinone. Couples the redox reaction to proton translocation (for every two electrons transferred, four hydrogen ions are translocated across the cytoplasmic membrane), and thus conserves the redox energy in a proton gradient. This subunit may bind ubiquinone. This chain is NADH-quinone oxidoreductase subunit H, found in Campylobacter jejuni (strain RM1221).